A 70-amino-acid polypeptide reads, in one-letter code: DNA-directed RNA polymerase subunit epsilon (70 aa).

This sequence belongs to the RNA polymerase subunit epsilon family. In terms of assembly, RNAP is composed of a core of 2 alpha, a beta and a beta' subunit. The core is associated with a delta subunit, and at least one of epsilon or omega. When a sigma factor is associated with the core the holoenzyme is formed, which can initiate transcription.

It catalyses the reaction RNA(n) + a ribonucleoside 5'-triphosphate = RNA(n+1) + diphosphate. In terms of biological role, a non-essential component of RNA polymerase (RNAP). This is DNA-directed RNA polymerase subunit epsilon from Enterococcus faecalis (strain ATCC 700802 / V583).